Here is a 396-residue protein sequence, read N- to C-terminus: ATP-dependent RNA helicase eIF4A (396 aa).

The Q motif signature appears at 23–51; the sequence is DSFDEMNLKSELLRGIYAYGFERPSAIQQ. The 171-residue stretch at 54–224 folds into the Helicase ATP-binding domain; it reads IMPVIKGHDV…TKFMRDPVRI (171 aa). 67-74 lines the ATP pocket; the sequence is AQSGTGKT. Positions 172-175 match the DEAD box motif; the sequence is DEAD. The region spanning 235–396 is the Helicase C-terminal domain; the sequence is GIKQFYIAVE…EMPMNVADLI (162 aa).

Belongs to the DEAD box helicase family. eIF4A subfamily. As to quaternary structure, component of the eIF4F complex, which composition varies with external and internal environmental conditions. It is composed of at least eIF4A, eIF4E and eIF4G.

Its subcellular location is the cytoplasm. The enzyme catalyses ATP + H2O = ADP + phosphate + H(+). Functionally, ATP-dependent RNA helicase which is a subunit of the eIF4F complex involved in cap recognition and is required for mRNA binding to ribosome. In the current model of translation initiation, eIF4A unwinds RNA secondary structures in the 5'-UTR of mRNAs which is necessary to allow efficient binding of the small ribosomal subunit, and subsequent scanning for the initiator codon. The chain is ATP-dependent RNA helicase eIF4A (TIF1) from Pyricularia oryzae (strain 70-15 / ATCC MYA-4617 / FGSC 8958) (Rice blast fungus).